We begin with the raw amino-acid sequence, 605 residues long: Vicilin GC72-A (605 aa).

The signal sequence occupies residues 1-23 (MVRNKSVFVVLLFSLFLSFGLLC). Disordered regions lie at residues 52-81 (TRGQ…EDPQ) and 157-181 (GERE…QRNN). Residues 166 to 175 (EEEEESDEGE) are compositionally biased toward acidic residues. 2 consecutive Cupin type-1 domains span residues 183–341 (YYFH…EQLD) and 387–564 (FNLL…RLVD). Residues 465–485 (SSDWSSREEEEQEEQEVERRS) are disordered.

This sequence belongs to the 7S seed storage protein family.

Its subcellular location is the vacuole. The protein resides in the aleurone grain. Functionally, seed storage protein. The protein is Vicilin GC72-A of Gossypium hirsutum (Upland cotton).